We begin with the raw amino-acid sequence, 229 residues long: Large ribosomal subunit protein uL1 (229 aa).

It belongs to the universal ribosomal protein uL1 family. In terms of assembly, part of the 50S ribosomal subunit.

In terms of biological role, binds directly to 23S rRNA. The L1 stalk is quite mobile in the ribosome, and is involved in E site tRNA release. Protein L1 is also a translational repressor protein, it controls the translation of the L11 operon by binding to its mRNA. The polypeptide is Large ribosomal subunit protein uL1 (Streptococcus uberis (strain ATCC BAA-854 / 0140J)).